Reading from the N-terminus, the 163-residue chain is Cytochrome c-type biogenesis protein CcmE (163 aa).

Residues 1 to 8 (MNPRRKKR) are Cytoplasmic-facing. A helical; Signal-anchor for type II membrane protein transmembrane segment spans residues 9 to 29 (LTIILAISAGLAAVIGLVLYA). The Periplasmic portion of the chain corresponds to 30–163 (LSQNIDLFYT…TEAQLKGAKQ (134 aa)). Residues H131 and Y135 each contribute to the heme site.

Belongs to the CcmE/CycJ family.

The protein resides in the cell inner membrane. Its function is as follows. Heme chaperone required for the biogenesis of c-type cytochromes. Transiently binds heme delivered by CcmC and transfers the heme to apo-cytochromes in a process facilitated by CcmF and CcmH. This chain is Cytochrome c-type biogenesis protein CcmE, found in Aeromonas salmonicida (strain A449).